We begin with the raw amino-acid sequence, 208 residues long: 3-demethoxyubiquinol 3-hydroxylase (208 aa).

Residues Glu57, Glu87, His90, Glu139, Glu171, and His174 each contribute to the Fe cation site.

Belongs to the COQ7 family. Fe cation serves as cofactor.

The protein resides in the cell membrane. The catalysed reaction is a 5-methoxy-2-methyl-3-(all-trans-polyprenyl)benzene-1,4-diol + AH2 + O2 = a 3-demethylubiquinol + A + H2O. Its pathway is cofactor biosynthesis; ubiquinone biosynthesis. In terms of biological role, catalyzes the hydroxylation of 2-nonaprenyl-3-methyl-6-methoxy-1,4-benzoquinol during ubiquinone biosynthesis. The sequence is that of 3-demethoxyubiquinol 3-hydroxylase from Nitrosomonas eutropha (strain DSM 101675 / C91 / Nm57).